The primary structure comprises 624 residues: MPRIARLPDIVANKISAGEVVQRPASVVKELLENAIDAGATRITVAIKDAGKELVQVIDNGSGMDEEDALRCVERFATSKISDAEELDALTTLGFRGEALASISTVSHFELRTRRENDNVGIQLRYEGGVLSERGKAASEPGTAVSVRNLFYNVPARRKFLKSNATEFKHIFESVKAQVLAYPEIQWQMINDDETLFDFRSSDMHERLNFFFGDDFAGSLIEVHDDNDFLSLHGYVGKPSMQKRQKNEQFIYLNRRVIQNRMLSQALQQAYGELLVERHSPFVLLFLGIDPQQTDVNVHPAKLEVKFEDERSVRTMFYTIIKRSVRMQDFSPDVGGEGFHETSDSFSSRSSQHSDARLGFQAVPSRASSTDDLYREFQESTPKRPMPDRTRVSEQEEMFSHSADIFCEPDREFRSSDFGQVSEEFVDGVRLEPEEKDPKIWQLHNKYIICQIKTGLMLIDQHVAHERVLYERAVDIMDNNVPNAQQLLFPQKVELKPWEFEIYLEICDDLDRLGFNLGTLGTRTVMIEGVPQDVRSGSEAYILQDMIQEYQQNASKLKLEKRENLAKSYSCRNAIMSGQALSLEDMRSLIDRLFATKMPYVCPHGRPVIIRISLDQLDRMFGRK.

Residues 336-357 (GEGFHETSDSFSSRSSQHSDAR) are disordered. Over residues 344 to 353 (DSFSSRSSQH) the composition is skewed to low complexity.

It belongs to the DNA mismatch repair MutL/HexB family.

Its function is as follows. This protein is involved in the repair of mismatches in DNA. It is required for dam-dependent methyl-directed DNA mismatch repair. May act as a 'molecular matchmaker', a protein that promotes the formation of a stable complex between two or more DNA-binding proteins in an ATP-dependent manner without itself being part of a final effector complex. The polypeptide is DNA mismatch repair protein MutL (Chlorobium phaeobacteroides (strain BS1)).